A 382-amino-acid chain; its full sequence is Na(+)/H(+) antiporter NhaA 2 (382 aa).

Transmembrane regions (helical) follow at residues 8–28 (FFSS…AAII), 49–69 (LSVE…MVGL), 87–107 (ALPG…YVWF), 115–135 (LAGW…VLAL), 146–166 (IFLS…IALF), 169–189 (SNIS…LFIM), 209–229 (FFML…ALFI), 252–272 (WVTF…ALSG), 286–306 (VALG…LLAV), 325–345 (VSVL…LAFA), and 353–373 (EVKV…MLIL).

It belongs to the NhaA Na(+)/H(+) (TC 2.A.33) antiporter family.

The protein resides in the cell inner membrane. It carries out the reaction Na(+)(in) + 2 H(+)(out) = Na(+)(out) + 2 H(+)(in). Its function is as follows. Na(+)/H(+) antiporter that extrudes sodium in exchange for external protons. The polypeptide is Na(+)/H(+) antiporter NhaA 2 (Klebsiella pneumoniae subsp. pneumoniae (strain ATCC 700721 / MGH 78578)).